A 145-amino-acid chain; its full sequence is D-aminoacyl-tRNA deacylase (145 aa).

Positions 137 to 138 (GP) match the Gly-cisPro motif, important for rejection of L-amino acids motif.

Belongs to the DTD family. In terms of assembly, homodimer.

Its subcellular location is the cytoplasm. It carries out the reaction glycyl-tRNA(Ala) + H2O = tRNA(Ala) + glycine + H(+). The enzyme catalyses a D-aminoacyl-tRNA + H2O = a tRNA + a D-alpha-amino acid + H(+). In terms of biological role, an aminoacyl-tRNA editing enzyme that deacylates mischarged D-aminoacyl-tRNAs. Also deacylates mischarged glycyl-tRNA(Ala), protecting cells against glycine mischarging by AlaRS. Acts via tRNA-based rather than protein-based catalysis; rejects L-amino acids rather than detecting D-amino acids in the active site. By recycling D-aminoacyl-tRNA to D-amino acids and free tRNA molecules, this enzyme counteracts the toxicity associated with the formation of D-aminoacyl-tRNA entities in vivo and helps enforce protein L-homochirality. The protein is D-aminoacyl-tRNA deacylase of Pseudomonas putida (strain ATCC 700007 / DSM 6899 / JCM 31910 / BCRC 17059 / LMG 24140 / F1).